We begin with the raw amino-acid sequence, 369 residues long: Protein V (369 aa).

Disordered regions lie at residues 1 to 23 (MDQDALISKEDSEVEREASGGRE) and 54 to 320 (INTL…GHRR). 4 stretches are compositionally biased toward basic and acidic residues: residues 7-20 (ISKEDSEVEREASG), 99-110 (AEAHARNVDKQN), 150-168 (GAEDENREMAANPDKRGED), and 175-193 (EEIRRSAPLPDEREGRADN). A phosphoserine; by host mark is found at S249, S257, and S260. Zn(2+) contacts are provided by H318, C337, C341, C353, C355, C358, C362, and C365.

This sequence belongs to the paramyxoviruses V protein family. Interacts with host IFIH1/MDA5 and DHX58/LGP2. Interacts with host IRF3. Interacts with host RIGI regulatory protein (via CARDs domain) and host TRIM25 (via SPRY domain); these interactions prevent TRIM25-mediated ubiquitination of RIG-I and disrupts downstream RIG-I signaling.

It is found in the host cytoplasm. Plays an essential role in the inhibition of host immune response. Prevents the establishment of cellular antiviral state by blocking interferon-alpha/beta (IFN-alpha/beta) production and signaling pathway. Interacts with host IFIH1/MDA5 and DHX58/LGP2 to inhibit the transduction pathway involved in the activation of IFN-beta promoter, thus protecting the virus against cell antiviral state. Also interacts with and inhibits host IRF3. Blocks the type I interferon signaling pathway by disrupting the RIG-I signaling pathway. In Cavia cutleri (Guinea pig), this protein is Protein V (P/V/C).